The primary structure comprises 264 residues: Osteopontin (264 aa).

Positions 1-16 are cleaved as a signal peptide; it reads MKLAFLCLCFISIAAA. 2 disordered regions span residues 21–141 and 166–264; these read KSRQ…RGDS and IEDD…EVTR. The segment covering 31–51 has biased composition (basic and acidic residues); that stretch reads SEEKYDPRSHHTHRYHQDHVD. Residues 52-73 are compositionally biased toward polar residues; sequence SQSQEHLQQTQNDLASLQQTHY. Positions 97-118 are enriched in acidic residues; sequence AVDDDDDDDNDSNDTDESDEVV. 2 N-linked (GlcNAc...) asparagine glycosylation sites follow: asparagine 106 and asparagine 109. Residues 132–134 carry the Cell attachment site motif; sequence RGD. Residues 186-212 are compositionally biased toward basic and acidic residues; sequence KESREQDSRELAQHQSVENDSRPRFDS. N-linked (GlcNAc...) asparagine glycosylation is found at asparagine 204 and asparagine 242. Polar residues predominate over residues 233–246; the sequence is ASRSAVDTSNQTLE. The span at 252–264 shows a compositional bias: basic and acidic residues; the sequence is EDRHSIENNEVTR.

The protein belongs to the osteopontin family. In terms of processing, extensively phosphorylated on serine residues.

It is found in the secreted. Its function is as follows. Major non-collagenous bone protein that binds tightly to hydroxyapatite. Appears to form an integral part of the mineralized matrix. Probably important to cell-matrix interaction. Functionally, acts as a cytokine involved in enhancing production of interferon-gamma and interleukin-12 and reducing production of interleukin-10 and is essential in the pathway that leads to type I immunity. The sequence is that of Osteopontin (SPP1) from Gallus gallus (Chicken).